A 356-amino-acid polypeptide reads, in one-letter code: Protein RecA (356 aa).

Position 67–74 (67–74 (GPESSGKT)) interacts with ATP.

The protein belongs to the RecA family.

Its subcellular location is the cytoplasm. Can catalyze the hydrolysis of ATP in the presence of single-stranded DNA, the ATP-dependent uptake of single-stranded DNA by duplex DNA, and the ATP-dependent hybridization of homologous single-stranded DNAs. It interacts with LexA causing its activation and leading to its autocatalytic cleavage. This Yersinia pseudotuberculosis serotype I (strain IP32953) protein is Protein RecA.